Consider the following 123-residue polypeptide: Transmembrane protein 254 (123 aa).

Helical transmembrane passes span 15 to 35, 63 to 83, and 95 to 115; these read LFWF…VFWP, NGYW…LVLC, and LLWF…LFAY.

Its subcellular location is the membrane. This is Transmembrane protein 254 (Tmem254) from Rattus norvegicus (Rat).